Reading from the N-terminus, the 27-residue chain is DELTA-pseudomyrmecitoxin-Pp1a subunit A (27 aa).

As to quaternary structure, heterodimer composed of subunit A and subunit B (DELTA-PSDTX-Pp1a); disulfide-linked. Expressed by the venom gland.

The protein resides in the secreted. Functionally, this heterodimer has insecticidal and cytotoxic properties. Induces immediate paralysis when injected into blowflies (Lucilia cuprina), and then death within 24 hours. Also inhibits the growth of Aedes albopictus mosquito C6/36 cells. The polypeptide is DELTA-pseudomyrmecitoxin-Pp1a subunit A (Pseudomyrmex penetrator (Ant)).